Here is a 497-residue protein sequence, read N- to C-terminus: Glycerol kinase (497 aa).

Thr-12 provides a ligand contact to ADP. Thr-12, Thr-13, and Ser-14 together coordinate ATP. A sn-glycerol 3-phosphate-binding site is contributed by Thr-12. Residue Arg-16 coordinates ADP. Residues Arg-82, Glu-83, Tyr-134, and Asp-243 each coordinate sn-glycerol 3-phosphate. Residues Arg-82, Glu-83, Tyr-134, Asp-243, and Gln-244 each coordinate glycerol. ADP contacts are provided by Thr-265 and Gly-308. Residues Thr-265, Gly-308, Gln-312, and Gly-411 each contribute to the ATP site. ADP is bound at residue Gly-411.

This sequence belongs to the FGGY kinase family.

It carries out the reaction glycerol + ATP = sn-glycerol 3-phosphate + ADP + H(+). The protein operates within polyol metabolism; glycerol degradation via glycerol kinase pathway; sn-glycerol 3-phosphate from glycerol: step 1/1. Inhibited by fructose 1,6-bisphosphate (FBP). Functionally, key enzyme in the regulation of glycerol uptake and metabolism. Catalyzes the phosphorylation of glycerol to yield sn-glycerol 3-phosphate. The chain is Glycerol kinase from Sinorhizobium fredii (strain NBRC 101917 / NGR234).